An 863-amino-acid chain; its full sequence is Protein translocase subunit SecA (863 aa).

ATP-binding positions include Q88, 106-110, and D507; that span reads GEGKT. The segment at 806 to 863 is disordered; that stretch reads KSHEQNEQFLSNTTESGVNENGEAQITKVPRNSPCPCGSGKKYKECHGKSGPKKGILA. Polar residues predominate over residues 812 to 829; that stretch reads EQFLSNTTESGVNENGEA. The Zn(2+) site is built by C840, C842, C851, and H852.

The protein belongs to the SecA family. Monomer and homodimer. Part of the essential Sec protein translocation apparatus which comprises SecA, SecYEG and auxiliary proteins SecDF-YajC and YidC. Requires Zn(2+) as cofactor.

The protein resides in the cell inner membrane. It localises to the cytoplasm. The catalysed reaction is ATP + H2O + cellular proteinSide 1 = ADP + phosphate + cellular proteinSide 2.. Functionally, part of the Sec protein translocase complex. Interacts with the SecYEG preprotein conducting channel. Has a central role in coupling the hydrolysis of ATP to the transfer of proteins into and across the cell membrane, serving as an ATP-driven molecular motor driving the stepwise translocation of polypeptide chains across the membrane. This chain is Protein translocase subunit SecA, found in Campylobacter lari (strain RM2100 / D67 / ATCC BAA-1060).